A 475-amino-acid chain; its full sequence is Exodeoxyribonuclease I (475 aa).

Residues 13 to 192 (FHDYETFGTH…AMADVYATIA (180 aa)) form the Exonuclease domain. The Mg(2+) site is built by aspartate 15 and glutamate 17. Glutamate 17 and arginine 165 together coordinate substrate. Aspartate 186 is a Mg(2+) binding site. The ExoI SH3-like domain maps to 202–355 (PRLFDYLFTH…KVVAIFAEAE (154 aa)). Residues 358–475 (TPSDNVDAQL…ALWQYAEEIV (118 aa)) form the ExoI C-terminal domain.

As to quaternary structure, monomer. Interacts with ssb (via C-terminus); this interaction stimulates the exonuclease activity by recruiting the enzyme to its substrate. It depends on Mg(2+) as a cofactor.

It carries out the reaction Exonucleolytic cleavage in the 3'- to 5'-direction to yield nucleoside 5'-phosphates.. Inhibited by 10 mM EDTA. In terms of biological role, degrades single-stranded DNA (ssDNA) in a highly processive manner. Also functions as a DNA deoxyribophosphodiesterase that releases deoxyribose-phosphate moieties following the cleavage of DNA at an apurinic/apyrimidinic (AP) site by either an AP endonuclease or AP lyase. The polypeptide is Exodeoxyribonuclease I (sbcB) (Escherichia coli (strain K12)).